The chain runs to 348 residues: Probable dual-specificity RNA methyltransferase RlmN (348 aa).

Glu-93 (proton acceptor) is an active-site residue. Residues Thr-99 to Asp-333 form the Radical SAM core domain. An intrachain disulfide couples Cys-106 to Cys-338. Residues Cys-113, Cys-117, and Cys-120 each coordinate [4Fe-4S] cluster. S-adenosyl-L-methionine-binding positions include Gly-160–Glu-161, Ser-190, Ser-219–His-221, and Asn-295. The S-methylcysteine intermediate role is filled by Cys-338.

This sequence belongs to the radical SAM superfamily. RlmN family. Requires [4Fe-4S] cluster as cofactor.

The protein resides in the cytoplasm. It catalyses the reaction adenosine(2503) in 23S rRNA + 2 reduced [2Fe-2S]-[ferredoxin] + 2 S-adenosyl-L-methionine = 2-methyladenosine(2503) in 23S rRNA + 5'-deoxyadenosine + L-methionine + 2 oxidized [2Fe-2S]-[ferredoxin] + S-adenosyl-L-homocysteine. The catalysed reaction is adenosine(37) in tRNA + 2 reduced [2Fe-2S]-[ferredoxin] + 2 S-adenosyl-L-methionine = 2-methyladenosine(37) in tRNA + 5'-deoxyadenosine + L-methionine + 2 oxidized [2Fe-2S]-[ferredoxin] + S-adenosyl-L-homocysteine. Functionally, specifically methylates position 2 of adenine 2503 in 23S rRNA and position 2 of adenine 37 in tRNAs. The sequence is that of Probable dual-specificity RNA methyltransferase RlmN from Prochlorococcus marinus (strain MIT 9515).